Here is a 610-residue protein sequence, read N- to C-terminus: Aspartate--tRNA(Asp/Asn) ligase (610 aa).

Glu182 serves as a coordination point for L-aspartate. Residues 206–209 (QLFK) form an aspartate region. Arg228 lines the L-aspartate pocket. Residues 228–230 (RDE) and Gln237 contribute to the ATP site. His470 provides a ligand contact to L-aspartate. Residue Glu506 participates in ATP binding. Arg513 serves as a coordination point for L-aspartate. 558–561 (GLDR) is an ATP binding site.

It belongs to the class-II aminoacyl-tRNA synthetase family. Type 1 subfamily. Homodimer.

The protein localises to the cytoplasm. It carries out the reaction tRNA(Asx) + L-aspartate + ATP = L-aspartyl-tRNA(Asx) + AMP + diphosphate. Functionally, aspartyl-tRNA synthetase with relaxed tRNA specificity since it is able to aspartylate not only its cognate tRNA(Asp) but also tRNA(Asn). Reaction proceeds in two steps: L-aspartate is first activated by ATP to form Asp-AMP and then transferred to the acceptor end of tRNA(Asp/Asn). The chain is Aspartate--tRNA(Asp/Asn) ligase from Acidobacterium capsulatum (strain ATCC 51196 / DSM 11244 / BCRC 80197 / JCM 7670 / NBRC 15755 / NCIMB 13165 / 161).